We begin with the raw amino-acid sequence, 167 residues long: Inclusion membrane protein G (167 aa).

2 helical membrane-spanning segments follow: residues 33–57 (VVLALSLFAVFASGSLSILSAAVLF) and 63–88 (VLPYLLILTTALLGCVYAVIVLLRSL). Residues 94–167 (SCKKRSPEEI…DNSRSRSRSF (74 aa)) form a sufficient for interaction with human 14-3-3 beta protein region. The segment at 97-167 (KRSPEEIEGA…DNSRSRSRSF (71 aa)) is disordered. Residues 122–135 (ESASPQASPTSSTL) show a composition bias toward low complexity. The short motif at 161 to 166 (RSRSRS) is the Phosphorylation-dependent binding motif element. S166 is subject to Phosphoserine.

In infected HeLa cells colocalizes with host 14-3-3 protein (YWHAB); phosphorylation of Ser-166 is probably required. Interacts with Pkn1. Post-translationally, phosphorylated, possibly at more than one position, in infected HeLa cells. Phosphorylated by chlamydial kinase Pnk1.

It localises to the secreted. The protein localises to the host vacuole. It is found in the host pathogen-containing vacuole. Its subcellular location is the host pathogen-containing vacuole membrane. Functionally, inclusion membrane protein probably involved in early modification events of the chlamydial inclusion. The protein is Inclusion membrane protein G of Chlamydia trachomatis serovar L2 (strain ATCC VR-902B / DSM 19102 / 434/Bu).